Reading from the N-terminus, the 95-residue chain is Aspartyl/glutamyl-tRNA(Asn/Gln) amidotransferase subunit C (95 aa).

The protein belongs to the GatC family. In terms of assembly, heterotrimer of A, B and C subunits.

The enzyme catalyses L-glutamyl-tRNA(Gln) + L-glutamine + ATP + H2O = L-glutaminyl-tRNA(Gln) + L-glutamate + ADP + phosphate + H(+). It carries out the reaction L-aspartyl-tRNA(Asn) + L-glutamine + ATP + H2O = L-asparaginyl-tRNA(Asn) + L-glutamate + ADP + phosphate + 2 H(+). Its function is as follows. Allows the formation of correctly charged Asn-tRNA(Asn) or Gln-tRNA(Gln) through the transamidation of misacylated Asp-tRNA(Asn) or Glu-tRNA(Gln) in organisms which lack either or both of asparaginyl-tRNA or glutaminyl-tRNA synthetases. The reaction takes place in the presence of glutamine and ATP through an activated phospho-Asp-tRNA(Asn) or phospho-Glu-tRNA(Gln). In Prochlorococcus marinus (strain NATL1A), this protein is Aspartyl/glutamyl-tRNA(Asn/Gln) amidotransferase subunit C.